The following is a 610-amino-acid chain: Calmegin (610 aa).

The N-terminal stretch at 1–19 (MHFQAFWLCLGLLFISINA) is a signal peptide. The Lumenal portion of the chain corresponds to 20–471 (EFMDDDVETE…LMAAAEGHPW (452 aa)). An N6-acetyllysine modification is found at Lys128. A disulfide bond links Cys151 and Cys185. A disordered region spans residues 258–338 (VPPIKPPKEI…KPDDWNEDTD (81 aa)). Residues 263-284 (PPKEIEDPNDKKPEEWDERAKI) are compositionally biased toward basic and acidic residues. Repeat copies occupy residues 267-280 (IEDP…EWDE), 284-297 (IPDP…DWDE), 303-316 (IEDS…GWLD), 322-335 (IPDP…DWNE), 339-352 (GEWE…PACR), 356-369 (GEWK…PKYK), 370-383 (GVWR…PNYQ), and 384-397 (GIWS…PDYF). Basic and acidic residues predominate over residues 317–332 (DEPKFIPDPNAEKPDD). Residues 317-350 (DEPKFIPDPNAEKPDDWNEDTDGEWEAPQILNPA) form an interaction with PPIB region. An intrachain disulfide couples Cys351 to Cys355. The helical transmembrane segment at 472 to 492 (LWLIYLVTAGVPIALITSFCW) threads the bilayer. Residues 493–610 (PRKVKKKHKD…SVRKRRVRKD (118 aa)) lie on the Cytoplasmic side of the membrane. Over residues 521–548 (QEEKEEKAALEKPMDLEEEKKQNDGEML) the composition is skewed to basic and acidic residues. The interval 521-610 (QEEKEEKAAL…SVRKRRVRKD (90 aa)) is disordered. The segment covering 549–571 (EKEEESEPEEKSEEEIEIIEGQE) has biased composition (acidic residues). Residues Ser560, Ser576, Ser579, Ser581, Ser591, Ser594, and Ser601 each carry the phosphoserine modification. Residues 601 to 610 (SVRKRRVRKD) are compositionally biased toward basic residues.

This sequence belongs to the calreticulin family. Interacts with PPIB. Interacts with ADAM2. Interacts with PDILT. In terms of tissue distribution, detected in testis (at protein level). Detected in testis.

Its subcellular location is the endoplasmic reticulum membrane. Its function is as follows. Functions during spermatogenesis as a chaperone for a range of client proteins that are important for sperm adhesion onto the egg zona pellucida and for subsequent penetration of the zona pellucida. Required for normal sperm migration from the uterus into the oviduct. Required for normal male fertility. Binds calcium ions. This Homo sapiens (Human) protein is Calmegin (CLGN).